Reading from the N-terminus, the 200-residue chain is Ras-related protein RABF2a (200 aa).

17–25 (GDVGAGKSS) provides a ligand contact to GTP. The Effector region motif lies at 39–47 (QESTIGAAF). GTP-binding positions include 65-69 (DTAGQ), 123-126 (NKAD), and 153-154 (SA). Residues C198 and C199 are each lipidated (S-geranylgeranyl cysteine).

This sequence belongs to the small GTPase superfamily. Rab family. Interacts with VPS9A. Interacts with EREX (via PX domain). Binds to VPS3. As to expression, high in stem, root, and inflorescence.

The protein localises to the endosome membrane. It is found in the prevacuolar compartment membrane. Its function is as follows. Involved in the trafficking of soluble cargo proteins from the prevacuolar compartment to the central vacuole. Involved in vacuolar transport of storage proteins with EREX as effector. Regulates membrane trafficking to protein storage vacuoles (PSVs). The polypeptide is Ras-related protein RABF2a (RABF2A) (Arabidopsis thaliana (Mouse-ear cress)).